Here is a 507-residue protein sequence, read N- to C-terminus: ATP synthase subunit alpha, chloroplastic (507 aa).

G170–T177 provides a ligand contact to ATP.

It belongs to the ATPase alpha/beta chains family. As to quaternary structure, F-type ATPases have 2 components, CF(1) - the catalytic core - and CF(0) - the membrane proton channel. CF(1) has five subunits: alpha(3), beta(3), gamma(1), delta(1), epsilon(1). CF(0) has four main subunits: a, b, b' and c.

The protein localises to the plastid. The protein resides in the chloroplast thylakoid membrane. The enzyme catalyses ATP + H2O + 4 H(+)(in) = ADP + phosphate + 5 H(+)(out). In terms of biological role, produces ATP from ADP in the presence of a proton gradient across the membrane. The alpha chain is a regulatory subunit. In Citrus sinensis (Sweet orange), this protein is ATP synthase subunit alpha, chloroplastic.